Consider the following 301-residue polypeptide: Envoplakin-like protein (301 aa).

A coiled-coil region spans residues Met1–Tyr88. 2 disordered regions span residues Arg18–Ser41 and Gly118–Ile166. The span at Ser26 to Ser41 shows a compositional bias: polar residues. A compositionally biased stretch (basic and acidic residues) spans Gly136 to Ala151.

The protein belongs to the plakin or cytolinker family.

This is Envoplakin-like protein (EVPLL) from Homo sapiens (Human).